The primary structure comprises 1163 residues: Pesticidal crystal protein Cry26Aa (1163 aa).

Belongs to the delta endotoxin family.

In terms of biological role, promotes colloidosmotic lysis by binding to the midgut epithelial cells of insects. This Bacillus thuringiensis subsp. finitimus protein is Pesticidal crystal protein Cry26Aa (cry26Aa).